Reading from the N-terminus, the 139-residue chain is Large ribosomal subunit protein uL22c (139 aa).

Belongs to the universal ribosomal protein uL22 family. As to quaternary structure, part of the 50S ribosomal subunit.

It localises to the plastid. The protein resides in the chloroplast. Functionally, this protein binds specifically to 23S rRNA. The globular domain of the protein is located near the polypeptide exit tunnel on the outside of the subunit, while an extended beta-hairpin is found that lines the wall of the exit tunnel in the center of the 70S ribosome. The sequence is that of Large ribosomal subunit protein uL22c (rpl22) from Cycas taitungensis (Prince sago).